Consider the following 953-residue polypeptide: Probable LRR receptor-like serine/threonine-protein kinase At1g53420 (953 aa).

Residues Met1 to Ala22 form the signal peptide. Residues Ser23 to Thr566 lie on the Extracellular side of the membrane. 6 LRR repeats span residues Trp63–Leu86, Leu88–Leu110, Pro111–Asn132, Thr135–Pro158, Asn159–Thr182, and Thr183–Trp205. Residues Asn100 and Asn132 are each glycosylated (N-linked (GlcNAc...) asparagine). 5 N-linked (GlcNAc...) asparagine glycosylation sites follow: Asn265, Asn315, Asn335, Asn378, and Asn423. A helical transmembrane segment spans residues Leu567–Trp587. Residues Lys588–His953 lie on the Cytoplasmic side of the membrane. The Protein kinase domain occupies Phe624 to Val901. ATP contacts are provided by residues Ile630–Val638 and Lys652. Tyr697 carries the phosphotyrosine modification. Asp750 (proton acceptor) is an active-site residue. Ser783 is modified (phosphoserine). Thr784 and Thr789 each carry phosphothreonine. Tyr797 is modified (phosphotyrosine).

This sequence belongs to the protein kinase superfamily. Ser/Thr protein kinase family.

The protein resides in the membrane. The enzyme catalyses L-seryl-[protein] + ATP = O-phospho-L-seryl-[protein] + ADP + H(+). It catalyses the reaction L-threonyl-[protein] + ATP = O-phospho-L-threonyl-[protein] + ADP + H(+). The polypeptide is Probable LRR receptor-like serine/threonine-protein kinase At1g53420 (Arabidopsis thaliana (Mouse-ear cress)).